A 702-amino-acid polypeptide reads, in one-letter code: Arginine decarboxylase 1 (702 aa).

K151 carries the post-translational modification N6-(pyridoxal phosphate)lysine. Substrate is bound at residue 336-346; the sequence is IDVGGGLGIDY. The segment covering 668-686 has biased composition (low complexity); it reads ASGESSGMSSDSEGSAAGA. The tract at residues 668–702 is disordered; that stretch reads ASGESSGMSSDSEGSAAGAAEEDDDEWEFMRGLTV.

The protein belongs to the Orn/Lys/Arg decarboxylase class-II family. SpeA subfamily. Pyridoxal 5'-phosphate is required as a cofactor. Requires Mg(2+) as cofactor. As to expression, expressed in roots, leaves and stems (at protein level).

It catalyses the reaction L-arginine + H(+) = agmatine + CO2. It participates in amine and polyamine biosynthesis; agmatine biosynthesis; agmatine from L-arginine: step 1/1. The chain is Arginine decarboxylase 1 (ADC1) from Oryza sativa subsp. japonica (Rice).